The sequence spans 107 residues: uncharacterized protein (107 aa).

Residues 87-107 (KNRNGPKAEKRRPYVRAHAKW) are disordered.

This is an uncharacterized protein from Saccharomyces cerevisiae (strain ATCC 204508 / S288c) (Baker's yeast).